A 255-amino-acid chain; its full sequence is Triosephosphate isomerase (255 aa).

Substrate is bound at residue 9-11 (NWK). The active-site Electrophile is the His-95. Glu-167 serves as the catalytic Proton acceptor. Substrate contacts are provided by residues Gly-173, Ser-212, and 233–234 (GG).

It belongs to the triosephosphate isomerase family. Homodimer.

The protein localises to the cytoplasm. The enzyme catalyses D-glyceraldehyde 3-phosphate = dihydroxyacetone phosphate. The protein operates within carbohydrate biosynthesis; gluconeogenesis. Its pathway is carbohydrate degradation; glycolysis; D-glyceraldehyde 3-phosphate from glycerone phosphate: step 1/1. Involved in the gluconeogenesis. Catalyzes stereospecifically the conversion of dihydroxyacetone phosphate (DHAP) to D-glyceraldehyde-3-phosphate (G3P). This Escherichia fergusonii (strain ATCC 35469 / DSM 13698 / CCUG 18766 / IAM 14443 / JCM 21226 / LMG 7866 / NBRC 102419 / NCTC 12128 / CDC 0568-73) protein is Triosephosphate isomerase.